The primary structure comprises 265 residues: 5'-nucleotidase SurE (265 aa).

Residues Asp-8, Asp-9, Ser-40, and Asn-98 each contribute to the a divalent metal cation site.

The protein belongs to the SurE nucleotidase family. It depends on a divalent metal cation as a cofactor.

The protein resides in the cytoplasm. The catalysed reaction is a ribonucleoside 5'-phosphate + H2O = a ribonucleoside + phosphate. Functionally, nucleotidase that shows phosphatase activity on nucleoside 5'-monophosphates. In Trichormus variabilis (strain ATCC 29413 / PCC 7937) (Anabaena variabilis), this protein is 5'-nucleotidase SurE.